The chain runs to 326 residues: Protein MICROTUBULE BINDING PROTEIN 2C (326 aa).

2 stretches are compositionally biased toward polar residues: residues M1–S15 and P34–E46. Disordered stretches follow at residues M1–E46 and E71–A132. Residues A132 to L183 adopt a coiled-coil conformation.

It belongs to the microtubule binding protein 2C family. In terms of assembly, interacts with STM. As to expression, expressed in seedlings, roots, flowers and developing ovules.

The protein resides in the cytoplasm. The protein localises to the cytoskeleton. In terms of biological role, prevents homeodomain proteins (e.g. STM) association to plasmodesmata and, consequently, cell-to-cell transport. Binds to RNA. Alters STM RNA binding capacity. Regulates cytoskeleton (e.g. actin) organization that determinates cell shape. Regulates stomata patterning and drought tolerance. Involved in restricting tobamovirus (e.g. oilseed rape mosaic virus) infectivity, probably by interfering with cell-to-cell virus movement. This is Protein MICROTUBULE BINDING PROTEIN 2C from Arabidopsis thaliana (Mouse-ear cress).